The sequence spans 509 residues: MDEFQRNSNKHRSWQQFFLYPLFFREDLYAIAHYHHLDRSGSSEPTEILVSNFLSFLTVKRSIRRIRKQNNSISLLGNSDSNKLIEYNKNSSFQLILEGFTIXLEVXXXXRSKHFIKXMDGWNSXRSIHCIXXFMEAKLPHSNYISDLRVPYSIHPEILVRIFRRWIRDVPSLHLLRSILHEWKNSFNRENLQKALITQRENTRFSLFLWNSYVYECESFLIPLIKRILNSQSLLYGSFPDRTHFEKKIKDIVIFPPHKISTKKIWLLKDSFIHYVRYGERSLIALKGTHLQVKKCRYHLFHFWQYYFHLWFQPYRICSLELSKTSFSFLGFFMHVKMRPLVVRAKMLDDLFITDLITNELNSTAPIRSILFSLAKEKFCDISGWPISKLSWTSLSDDDILDRFDRIWINLFHYYSGSINQDGLYHIKYILLLSCAKTLACKHKSTIRVIREQLGSELFTKSFSKEREFISSSSSKTRLQRERIWNLEIXQINPLANFWQKMQNKQIKN.

The protein belongs to the intron maturase 2 family. MatK subfamily.

It localises to the plastid. The protein localises to the chloroplast. In terms of biological role, usually encoded in the trnK tRNA gene intron. Probably assists in splicing its own and other chloroplast group II introns. The chain is Maturase K from Chamaecyparis obtusa (Hinoki false-cypress).